Consider the following 121-residue polypeptide: uncharacterized protein (121 aa).

Positions 7–121 (IFCKIVRGEV…GGREMSWPPG (115 aa)) constitute an HIT domain. Residues 105 to 109 (HLHLH) carry the Histidine triad motif motif.

This is an uncharacterized protein from Aquifex aeolicus (strain VF5).